The primary structure comprises 437 residues: Oxysterol-binding protein homolog 7 (437 aa).

The span at 23 to 32 (IASNAANSKP) shows a compositional bias: polar residues. The interval 23–42 (IASNAANSKPSGADTDDIDE) is disordered. The tract at residues 54–393 (IISQLKPGCD…EDLDYYIYKH (340 aa)) is OSBP-related domain (ORD). A 1,2-diacyl-sn-glycero-3-phospho-(1D-myo-inositol 4-phosphate)-binding positions include 64-69 (LSRITL), 126-129 (KPLN), and 157-158 (HH). Residues 64-69 (LSRITL) and Asn129 each bind a 1,2-diacyl-sn-glycero-3-phospho-L-serine. Ser183 lines the a 1,2-diacyl-sn-glycero-3-phospho-L-serine pocket. A Glycyl lysine isopeptide (Lys-Gly) (interchain with G-Cter in ubiquitin) cross-link involves residue Lys276. A 1,2-diacyl-sn-glycero-3-phospho-(1D-myo-inositol 4-phosphate) contacts are provided by Lys351, Glu355, and Arg359.

It belongs to the OSBP family. In terms of assembly, interacts with the AAA ATPase VPS4; regulates OSH7 membrane association. VPS4 is required for membrane dissociation of OSH7.

Its subcellular location is the cytoplasm. It localises to the cell membrane. The protein resides in the endoplasmic reticulum membrane. It catalyses the reaction a 1,2-diacyl-sn-glycero-3-phospho-L-serine(in) = a 1,2-diacyl-sn-glycero-3-phospho-L-serine(out). Ipid transport protein (LTP) involved in non-vesicular transfer of lipids between membranes. Functions in phosphoinositide-coupled directional transport of various lipids by carrying the lipid molecule in a hydrophobic pocket and transferring it between membranes through the cytosol. Involved in maintenance of intracellular sterol distribution and homeostasis. Involved in lipid countertransport between the endoplasmic reticulum and the plasma membrane. Specifically exchanges phosphatidylserine with phosphatidylinositol 4-phosphate (PI4P), delivering phosphatidylserine to the PM in exchange for PI4P, which is delivered to the ER-localized PI4P phosphatase SAC1 for degradation. Thus, by maintaining a PI4P gradient at the ER/PM interface, SAC1 drives PS transport. Binds phosphatidylserine and PI4P in a mutually exclusive manner. This chain is Oxysterol-binding protein homolog 7, found in Saccharomyces cerevisiae (strain ATCC 204508 / S288c) (Baker's yeast).